The sequence spans 153 residues: Transcription antitermination protein NusB (153 aa).

It belongs to the NusB family.

In terms of biological role, involved in transcription antitermination. Required for transcription of ribosomal RNA (rRNA) genes. Binds specifically to the boxA antiterminator sequence of the ribosomal RNA (rrn) operons. In Fusobacterium nucleatum subsp. nucleatum (strain ATCC 25586 / DSM 15643 / BCRC 10681 / CIP 101130 / JCM 8532 / KCTC 2640 / LMG 13131 / VPI 4355), this protein is Transcription antitermination protein NusB.